The following is a 1073-amino-acid chain: DNA-directed RNA polymerase subunit beta (1073 aa).

It belongs to the RNA polymerase beta chain family. In terms of assembly, in plastids the minimal PEP RNA polymerase catalytic core is composed of four subunits: alpha, beta, beta', and beta''. When a (nuclear-encoded) sigma factor is associated with the core the holoenzyme is formed, which can initiate transcription.

Its subcellular location is the plastid. The protein localises to the chloroplast. It catalyses the reaction RNA(n) + a ribonucleoside 5'-triphosphate = RNA(n+1) + diphosphate. In terms of biological role, DNA-dependent RNA polymerase catalyzes the transcription of DNA into RNA using the four ribonucleoside triphosphates as substrates. The chain is DNA-directed RNA polymerase subunit beta from Aethionema grandiflorum (Persian stone-cress).